Reading from the N-terminus, the 741-residue chain is Photosystem I P700 chlorophyll a apoprotein A2 1 (741 aa).

8 helical membrane passes run 46–69, 135–158, 175–199, 273–291, 334–357, 373–399, 421–443, and 524–542; these read IFAT…FHVA, LYTG…LHLQ, LNHH…HVAI, MAHH…GHMY, LHFQ…QHMY, AALY…IFLV, AIIS…LYVH, and FLVH…LILV. Residues C566 and C575 each contribute to the [4Fe-4S] cluster site. Helical transmembrane passes span 582 to 603 and 650 to 672; these read SFYL…YWHW and LSVW…MFLI. 3 residues coordinate chlorophyll a: H661, M669, and Y677. Position 678 (W678) interacts with phylloquinone. A helical membrane pass occupies residues 714 to 734; sequence VVGLAHFTVGYVLTYAAFLIA.

Belongs to the PsaA/PsaB family. The PsaA/B heterodimer binds the P700 chlorophyll special pair and subsequent electron acceptors. PSI consists of a core antenna complex that captures photons, and an electron transfer chain that converts photonic excitation into a charge separation. The cyanobacterial PSI reaction center is composed of one copy each of PsaA,B,C,D,E,F,I,J,K,L,M and X, and forms trimeric complexes. The cofactor is PSI electron transfer chain: 5 chlorophyll a, 1 chlorophyll a', 2 phylloquinones and 3 4Fe-4S clusters. PSI core antenna: 90 chlorophyll a, 22 carotenoids, 3 phospholipids and 1 galactolipid. P700 is a chlorophyll a/chlorophyll a' dimer, A0 is one or more chlorophyll a, A1 is one or both phylloquinones and FX is a shared 4Fe-4S iron-sulfur center..

The protein localises to the cellular thylakoid membrane. It carries out the reaction reduced [plastocyanin] + hnu + oxidized [2Fe-2S]-[ferredoxin] = oxidized [plastocyanin] + reduced [2Fe-2S]-[ferredoxin]. Functionally, psaA and PsaB bind P700, the primary electron donor of photosystem I (PSI), as well as the electron acceptors A0, A1 and FX. PSI is a plastocyanin/cytochrome c6-ferredoxin oxidoreductase, converting photonic excitation into a charge separation, which transfers an electron from the donor P700 chlorophyll pair to the spectroscopically characterized acceptors A0, A1, FX, FA and FB in turn. Oxidized P700 is reduced on the lumenal side of the thylakoid membrane by plastocyanin or cytochrome c6. The chain is Photosystem I P700 chlorophyll a apoprotein A2 1 (psaB1) from Nostoc sp. (strain PCC 7120 / SAG 25.82 / UTEX 2576).